Reading from the N-terminus, the 264-residue chain is MKAYLELMQHVLDHGTDKADRTGTGTRSVFGYQMRFDLAQGFPLLTTKKLHLRSIVHELLWFLAGDTNIRYLKDNGVRIWDEWADENGDLGPVYGYQWRSWPAPDGRHIDQISGLLDMIRRNPDSRRLIVSAWNPALVDDMALPPCHCLFQFYVADGKLSCQLYQRSADVFLGVPFNIASYALLTLMVAQVTGLQPGEFVHTFGDAHLYSNHFEQARLQLQREPRALPVMKLNPVVTDLFAFRFEDFTLEGYDPHPHIKAEVSV.

R21 contacts dUMP. H51 lines the (6R)-5,10-methylene-5,6,7,8-tetrahydrofolate pocket. A dUMP-binding site is contributed by 126-127; that stretch reads RR. The active-site Nucleophile is C146. DUMP is bound by residues 166–169, N177, and 207–209; these read RSAD and HLY. D169 contacts (6R)-5,10-methylene-5,6,7,8-tetrahydrofolate. Residue S263 coordinates (6R)-5,10-methylene-5,6,7,8-tetrahydrofolate.

The protein belongs to the thymidylate synthase family. Bacterial-type ThyA subfamily. As to quaternary structure, homodimer.

It is found in the cytoplasm. It catalyses the reaction dUMP + (6R)-5,10-methylene-5,6,7,8-tetrahydrofolate = 7,8-dihydrofolate + dTMP. It functions in the pathway pyrimidine metabolism; dTTP biosynthesis. In terms of biological role, catalyzes the reductive methylation of 2'-deoxyuridine-5'-monophosphate (dUMP) to 2'-deoxythymidine-5'-monophosphate (dTMP) while utilizing 5,10-methylenetetrahydrofolate (mTHF) as the methyl donor and reductant in the reaction, yielding dihydrofolate (DHF) as a by-product. This enzymatic reaction provides an intracellular de novo source of dTMP, an essential precursor for DNA biosynthesis. This Laribacter hongkongensis (strain HLHK9) protein is Thymidylate synthase.